Reading from the N-terminus, the 345-residue chain is N-acetyl-gamma-glutamyl-phosphate reductase (345 aa).

C149 is a catalytic residue.

The protein belongs to the NAGSA dehydrogenase family. Type 1 subfamily.

It localises to the cytoplasm. It catalyses the reaction N-acetyl-L-glutamate 5-semialdehyde + phosphate + NADP(+) = N-acetyl-L-glutamyl 5-phosphate + NADPH + H(+). The protein operates within amino-acid biosynthesis; L-arginine biosynthesis; N(2)-acetyl-L-ornithine from L-glutamate: step 3/4. Functionally, catalyzes the NADPH-dependent reduction of N-acetyl-5-glutamyl phosphate to yield N-acetyl-L-glutamate 5-semialdehyde. The sequence is that of N-acetyl-gamma-glutamyl-phosphate reductase from Herminiimonas arsenicoxydans.